Consider the following 139-residue polypeptide: D-ribose pyranase (139 aa).

His-20 acts as the Proton donor in catalysis. Residues Asp-28, His-106, and 128–130 (YAN) contribute to the substrate site.

This sequence belongs to the RbsD / FucU family. RbsD subfamily. In terms of assembly, homodecamer.

It localises to the cytoplasm. The catalysed reaction is beta-D-ribopyranose = beta-D-ribofuranose. Its pathway is carbohydrate metabolism; D-ribose degradation; D-ribose 5-phosphate from beta-D-ribopyranose: step 1/2. Its function is as follows. Catalyzes the interconversion of beta-pyran and beta-furan forms of D-ribose. This chain is D-ribose pyranase, found in Histophilus somni (strain 129Pt) (Haemophilus somnus).